The sequence spans 279 residues: Probable endonuclease 4 (279 aa).

The Zn(2+) site is built by His66, His106, Glu142, Asp175, His178, His212, Asp225, His227, and Glu257.

The protein belongs to the AP endonuclease 2 family. Zn(2+) serves as cofactor.

It catalyses the reaction Endonucleolytic cleavage to 5'-phosphooligonucleotide end-products.. Its function is as follows. Endonuclease IV plays a role in DNA repair. It cleaves phosphodiester bonds at apurinic or apyrimidinic (AP) sites, generating a 3'-hydroxyl group and a 5'-terminal sugar phosphate. The sequence is that of Probable endonuclease 4 from Moorella thermoacetica (strain ATCC 39073 / JCM 9320).